We begin with the raw amino-acid sequence, 48 residues long: SDCTLRNHDCTDDRHSCCRSKMFKDVCKCFYPSQAKKELCTCQQDKHL.

4 cysteine pairs are disulfide-bonded: Cys3–Cys18, Cys10–Cys27, Cys17–Cys42, and Cys29–Cys40.

This sequence belongs to the neurotoxin 19 (CSTX) family. 12 subfamily. In terms of assembly, heterodimer of A and B chains; disulfide-linked. Contains 4 disulfide bonds. As to expression, expressed by the venom gland.

Its subcellular location is the secreted. The chain is Toxin CSTX-14 from Cupiennius salei (American wandering spider).